Here is a 181-residue protein sequence, read N- to C-terminus: Small ribosomal subunit protein uS4 (181 aa).

An S4 RNA-binding domain is found at Arg108–Asn177. Residues Gly161–Arg181 form a disordered region. Positions Gly169–Arg181 are enriched in basic and acidic residues.

This sequence belongs to the universal ribosomal protein uS4 family. Part of the 30S ribosomal subunit. Contacts protein S5. The interaction surface between S4 and S5 is involved in control of translational fidelity.

Its function is as follows. One of the primary rRNA binding proteins, it binds directly to 16S rRNA where it nucleates assembly of the body of the 30S subunit. With S5 and S12 plays an important role in translational accuracy. This is Small ribosomal subunit protein uS4 from Methanosphaerula palustris (strain ATCC BAA-1556 / DSM 19958 / E1-9c).